The sequence spans 385 residues: Di-N-acetylchitobiase (385 aa).

A signal peptide spans 1-38 (MSRPQLRRWRLVSSPPSGVPGLALLALLALLALRLAAG). The region spanning 39–385 (TDCPCPEPEL…EVLKPKLLQR (347 aa)) is the GH18 domain. Catalysis depends on E143, which acts as the Proton donor. N-linked (GlcNAc...) asparagine glycosylation is found at N193, N228, N262, and N299.

The protein belongs to the glycosyl hydrolase 18 family.

It localises to the lysosome. Its function is as follows. Involved in the degradation of asparagine-linked glycoproteins. Hydrolyze of N-acetyl-beta-D-glucosamine (1-4)N-acetylglucosamine chitobiose core from the reducing end of the bond, it requires prior cleavage by glycosylasparaginase. The sequence is that of Di-N-acetylchitobiase (CTBS) from Homo sapiens (Human).